The primary structure comprises 504 residues: Acetyltransferase pyiB (504 aa).

A signal peptide spans 1-18 (MGFLSAGGLWASLFRARI). The N-linked (GlcNAc...) asparagine glycan is linked to asparagine 84. Catalysis depends on histidine 181, which acts as the Proton acceptor. N-linked (GlcNAc...) asparagine glycosylation is found at asparagine 413 and asparagine 467.

Belongs to the plant acyltransferase family.

The protein operates within mycotoxin biosynthesis. In terms of biological role, acetyltransferase; part of the gene cluster that mediates the biosynthesis of the mycotoxin pyrichalasin H, a tyrosine-derived cytochalasan that inhibits the growth of rice seedlings, but also inhibits lymphocyte capping and actin polymerization and alters cell morphology. Pyrichalasin H is indicated as the responsible agent for the genus-specific pathogenicity of M.grisea toward crabgrass. The first step in the pathway is catalyzed by the O-methyltransferase pyiA which methylates free tyrosine to generate the precursor O-methyltyrosine. The hybrid PKS-NRPS pyiS, assisted by the enoyl reductase pyiC, are responsible for fusion of the O-methyltyrosine precursor and the polyketide backbone. The polyketide synthase module (PKS) of pyiS is responsible for the synthesis of the polyketide backbone and the downstream nonribosomal peptide synthetase (NRPS) amidates the carboxyl end of the polyketide with the O-methyltyrosine precursor. As the NRPS A-domain demonstrates substrate tolerance, pyiS can also use phenylalanine, tyrosine and even para-chlorophenylalanine as amino acid precursor, which leads to the production of novel cytochalasans, including halogenated cytochalasans. Because pyiS lacks a designated enoylreductase (ER) domain, the required activity is provided the enoyl reductase pyiC. Reduction by the hydrolyase pyiE leads to 1,5-dihydropyrrolone, which is substrate for dehydration and intra-molecular Diels-Alder cyclization by the Diels-Alderase pyiF to yield the required isoindolone-fused macrocycle. The tailoring cytochrome P450 monooxygenases piyD and piyG catalyze the hydroxylation at C-18 and C-7, respectivily, whereas the short-chain dehydrogenase/reductase pyiH reduces the carbonyl at C-21 in preparation for the transfer of an acetyl group by the acetyltransferase pyiB. These 3 reactions whose order is not clear yet, lead to the production of O-methylpyrichalasin J, a deacetylated pyrichalasin H. Finally, pyiB to converts O-methylpyrichalasin J into the final product pyrichalasin H via acetylation of C-21. This chain is Acetyltransferase pyiB, found in Pyricularia grisea (Crabgrass-specific blast fungus).